Here is a 200-residue protein sequence, read N- to C-terminus: 3-isopropylmalate dehydratase small subunit (200 aa).

The protein belongs to the LeuD family. LeuD type 1 subfamily. As to quaternary structure, heterodimer of LeuC and LeuD.

It carries out the reaction (2R,3S)-3-isopropylmalate = (2S)-2-isopropylmalate. It functions in the pathway amino-acid biosynthesis; L-leucine biosynthesis; L-leucine from 3-methyl-2-oxobutanoate: step 2/4. Its function is as follows. Catalyzes the isomerization between 2-isopropylmalate and 3-isopropylmalate, via the formation of 2-isopropylmaleate. In Haemophilus influenzae (strain ATCC 51907 / DSM 11121 / KW20 / Rd), this protein is 3-isopropylmalate dehydratase small subunit (leuD).